The chain runs to 736 residues: Phosphoribosylformylglycinamidine synthase subunit PurL (736 aa).

The active site involves H48. ATP is bound by residues Y51 and K90. E92 contacts Mg(2+). Substrate-binding positions include 93–96 and R115; that span reads SHNH. H94 acts as the Proton acceptor in catalysis. D116 provides a ligand contact to Mg(2+). Position 239 (Q239) interacts with substrate. D267 contacts Mg(2+). 311–313 is a binding site for substrate; that stretch reads ESQ. Residues D492 and G529 each coordinate ATP. N530 provides a ligand contact to Mg(2+). Substrate is bound at residue S532.

Belongs to the FGAMS family. As to quaternary structure, monomer. Part of the FGAM synthase complex composed of 1 PurL, 1 PurQ and 2 PurS subunits.

It is found in the cytoplasm. It catalyses the reaction N(2)-formyl-N(1)-(5-phospho-beta-D-ribosyl)glycinamide + L-glutamine + ATP + H2O = 2-formamido-N(1)-(5-O-phospho-beta-D-ribosyl)acetamidine + L-glutamate + ADP + phosphate + H(+). Its pathway is purine metabolism; IMP biosynthesis via de novo pathway; 5-amino-1-(5-phospho-D-ribosyl)imidazole from N(2)-formyl-N(1)-(5-phospho-D-ribosyl)glycinamide: step 1/2. Part of the phosphoribosylformylglycinamidine synthase complex involved in the purines biosynthetic pathway. Catalyzes the ATP-dependent conversion of formylglycinamide ribonucleotide (FGAR) and glutamine to yield formylglycinamidine ribonucleotide (FGAM) and glutamate. The FGAM synthase complex is composed of three subunits. PurQ produces an ammonia molecule by converting glutamine to glutamate. PurL transfers the ammonia molecule to FGAR to form FGAM in an ATP-dependent manner. PurS interacts with PurQ and PurL and is thought to assist in the transfer of the ammonia molecule from PurQ to PurL. The polypeptide is Phosphoribosylformylglycinamidine synthase subunit PurL (Bradyrhizobium sp. (strain ORS 278)).